The sequence spans 158 residues: Phosphopantetheine adenylyltransferase (158 aa).

Residue threonine 10 coordinates substrate. ATP is bound by residues 10–11 and histidine 18; that span reads TF. Substrate contacts are provided by lysine 42, leucine 74, and arginine 88. ATP is bound by residues 89-91, glutamate 99, and 124-130; these read GIR and WRYLSST.

Belongs to the bacterial CoaD family. Homohexamer. Mg(2+) is required as a cofactor.

It localises to the cytoplasm. The enzyme catalyses (R)-4'-phosphopantetheine + ATP + H(+) = 3'-dephospho-CoA + diphosphate. It participates in cofactor biosynthesis; coenzyme A biosynthesis; CoA from (R)-pantothenate: step 4/5. Functionally, reversibly transfers an adenylyl group from ATP to 4'-phosphopantetheine, yielding dephospho-CoA (dPCoA) and pyrophosphate. The protein is Phosphopantetheine adenylyltransferase of Actinobacillus pleuropneumoniae serotype 5b (strain L20).